The following is a 310-amino-acid chain: Tyrosine recombinase XerC (310 aa).

Residues 11 to 97 (NSLQKPLSRF…SLRSFFDFLV (87 aa)) enclose the Core-binding (CB) domain. One can recognise a Tyr recombinase domain in the interval 118–298 (PLPKNLDVDE…DFQHLAQAYD (181 aa)). Active-site residues include Arg-157, Lys-181, His-250, Arg-253, and His-276. Tyr-285 functions as the O-(3'-phospho-DNA)-tyrosine intermediate in the catalytic mechanism.

It belongs to the 'phage' integrase family. XerC subfamily. As to quaternary structure, forms a cyclic heterotetrameric complex composed of two molecules of XerC and two molecules of XerD.

It is found in the cytoplasm. In terms of biological role, site-specific tyrosine recombinase, which acts by catalyzing the cutting and rejoining of the recombining DNA molecules. The XerC-XerD complex is essential to convert dimers of the bacterial chromosome into monomers to permit their segregation at cell division. It also contributes to the segregational stability of plasmids. The protein is Tyrosine recombinase XerC of Vibrio atlanticus (strain LGP32) (Vibrio splendidus (strain Mel32)).